The sequence spans 348 residues: MKNLLGSSINDLENVALDYGQAAFRGRQIYNWIYNYRNKNKNIDQIEVLPLDFREKLKVDGFKVSELVIKERNLANDGTLKLLLSTEDNESIECVGIPTEKRLTACLSSQVGCPMDCKFCATGKEGLKRSLKASEILDQILFIEYEMNRKVTNIVFMGMGEPLLNIDELLLSIRSINNDFQISQRKITVSTVAIPKMISKLSAKSFQILSNCQFTLAISLHASNQKTRETIIPSAKNYEIKNIIEDCKTFVRETGRRVSFEYLMLSGVNDKLEHACELSNLLKGFQCHVNLIQYNQIDEVEFQRTSLKNLQLFQSRLVNNGIAVSLRKSRGLDKNAACGQLRQNAKSK.

Glutamate 93 acts as the Proton acceptor in catalysis. A Radical SAM core domain is found at 99–333; sequence TEKRLTACLS…VSLRKSRGLD (235 aa). Cysteine 106 and cysteine 338 are disulfide-bonded. [4Fe-4S] cluster contacts are provided by cysteine 113, cysteine 117, and cysteine 120. Residues 160–161, serine 190, 219–221, and asparagine 295 each bind S-adenosyl-L-methionine; these read GE and SLH. The active-site S-methylcysteine intermediate is the cysteine 338.

It belongs to the radical SAM superfamily. RlmN family. [4Fe-4S] cluster serves as cofactor.

The protein resides in the cytoplasm. It carries out the reaction adenosine(2503) in 23S rRNA + 2 reduced [2Fe-2S]-[ferredoxin] + 2 S-adenosyl-L-methionine = 2-methyladenosine(2503) in 23S rRNA + 5'-deoxyadenosine + L-methionine + 2 oxidized [2Fe-2S]-[ferredoxin] + S-adenosyl-L-homocysteine. It catalyses the reaction adenosine(37) in tRNA + 2 reduced [2Fe-2S]-[ferredoxin] + 2 S-adenosyl-L-methionine = 2-methyladenosine(37) in tRNA + 5'-deoxyadenosine + L-methionine + 2 oxidized [2Fe-2S]-[ferredoxin] + S-adenosyl-L-homocysteine. Functionally, specifically methylates position 2 of adenine 2503 in 23S rRNA and position 2 of adenine 37 in tRNAs. In Prochlorococcus marinus (strain AS9601), this protein is Probable dual-specificity RNA methyltransferase RlmN.